The sequence spans 776 residues: Cilium assembly protein DZIP1L (776 aa).

Residues 166 to 189 form a C2H2-type zinc finger; it reads HTCHLCDKTFMNATFLRGHIQRRH. A coiled-coil region spans residues 196–450; the sequence is GKQKQEQQLG…RKVLAALRNN (255 aa). 2 positions are modified to phosphoserine: Ser425 and Ser426. Residues 520–776 are disordered; it reads SRAKKRWEGT…SGSRPRIPGW (257 aa). A compositionally biased stretch (low complexity) spans 600–618; sequence GPSSTPVSPGPGLSTPPFS. The span at 652 to 683 shows a compositional bias: polar residues; it reads WSDSETSEESAQSPGKGSDGLASSATLVQSMV. The segment covering 685–694 has biased composition (basic and acidic residues); the sequence is NLEKQLETPA. Positions 709 to 721 are enriched in polar residues; the sequence is TALQRSSTPARKT.

Belongs to the DZIP C2H2-type zinc-finger protein family. Interacts with SEPTIN2.

The protein resides in the cytoplasm. It localises to the cytoskeleton. It is found in the cilium basal body. The protein localises to the microtubule organizing center. Its subcellular location is the centrosome. The protein resides in the centriole. Functionally, involved in primary cilium formation. Probably acts as a transition zone protein required for localization of PKD1/PC1 and PKD2/PC2 to the ciliary membrane. The chain is Cilium assembly protein DZIP1L from Rattus norvegicus (Rat).